A 324-amino-acid chain; its full sequence is NADH-ubiquinone oxidoreductase chain 1 (324 aa).

A run of 8 helical transmembrane segments spans residues 5 to 25 (ILLY…ATAF), 75 to 95 (FLFL…WMPL), 106 to 126 (LGLL…LGSG), 146 to 166 (ISYE…TGGF), 177 to 197 (TVWL…STLA), 228 to 248 (LFFL…VILF), 259 to 279 (QIST…FLWI), and 299 to 319 (FLPL…ATAS).

Belongs to the complex I subunit 1 family.

Its subcellular location is the mitochondrion inner membrane. It carries out the reaction a ubiquinone + NADH + 5 H(+)(in) = a ubiquinol + NAD(+) + 4 H(+)(out). Functionally, core subunit of the mitochondrial membrane respiratory chain NADH dehydrogenase (Complex I) that is believed to belong to the minimal assembly required for catalysis. Complex I functions in the transfer of electrons from NADH to the respiratory chain. The immediate electron acceptor for the enzyme is believed to be ubiquinone. The sequence is that of NADH-ubiquinone oxidoreductase chain 1 (MT-ND1) from Squalus acanthias (Spiny dogfish).